A 923-amino-acid polypeptide reads, in one-letter code: Calmodulin-binding transcription activator 5 (923 aa).

The CG-1 DNA-binding region spans 25–151; sequence IQTMLDEAYS…YRETHEVHAA (127 aa). The segment at 272 to 372 is transcription activation; that stretch reads VYQNNNSCGA…HSHSDIPEQV (101 aa). The ANK repeat unit spans residues 611–640; that stretch reads QGWTALHWAAYYGREKMVAALLSAGARPNL. 3 consecutive IQ domains span residues 757-786, 799-828, and 875-904; these read NIIA…IQYR, MRKK…SVGV, and LERS…AHEE. Residues 824 to 846 form a calmodulin-binding region; the sequence is WSVGVLEKAILRWRLKRKGFRGL. A coiled-coil region spans residues 887–914; it reads RSKKAQQDYRRMKLAHEEAQLEYDGMQE.

It belongs to the CAMTA family. In terms of tissue distribution, expressed in roots, stems, leaves, pollen, top of sepals and siliques.

It localises to the nucleus. Transcription activator. Binds to the DNA consensus sequence 5'-[ACG]CGCG[GTC]-3'. Regulates transcriptional activity in response to calcium signals. Binds calmodulin in a calcium-dependent manner. Involved in response to cold. Contributes together with CAMTA3 to the positive regulation of the cold-induced expression of DREB1A/CBF3, DREB1B/CBF1 and DREB1C/CBF2. The sequence is that of Calmodulin-binding transcription activator 5 from Arabidopsis thaliana (Mouse-ear cress).